The sequence spans 458 residues: UDP-N-acetylmuramoylalanine--D-glutamate ligase (458 aa).

An ATP-binding site is contributed by 124–130; it reads GSDGKTT.

Belongs to the MurCDEF family.

It localises to the cytoplasm. The enzyme catalyses UDP-N-acetyl-alpha-D-muramoyl-L-alanine + D-glutamate + ATP = UDP-N-acetyl-alpha-D-muramoyl-L-alanyl-D-glutamate + ADP + phosphate + H(+). It functions in the pathway cell wall biogenesis; peptidoglycan biosynthesis. In terms of biological role, cell wall formation. Catalyzes the addition of glutamate to the nucleotide precursor UDP-N-acetylmuramoyl-L-alanine (UMA). In Clostridium botulinum (strain Alaska E43 / Type E3), this protein is UDP-N-acetylmuramoylalanine--D-glutamate ligase.